Here is a 194-residue protein sequence, read N- to C-terminus: Endoribonuclease YbeY (194 aa).

Positions 151, 155, and 161 each coordinate Zn(2+).

This sequence belongs to the endoribonuclease YbeY family. Zn(2+) is required as a cofactor.

Its subcellular location is the cytoplasm. Single strand-specific metallo-endoribonuclease involved in late-stage 70S ribosome quality control and in maturation of the 3' terminus of the 16S rRNA. The sequence is that of Endoribonuclease YbeY from Gloeobacter violaceus (strain ATCC 29082 / PCC 7421).